We begin with the raw amino-acid sequence, 616 residues long: Protein phosphatase EYA4 (616 aa).

Position 1 is an N-acetylmethionine (methionine 1). 3 disordered regions span residues 1-66 (MEDT…VTTN), 186-211 (SQTQ…PGQT), and 277-345 (ADGT…DSDL). Glycyl lysine isopeptide (Lys-Gly) (interchain with G-Cter in SUMO2) cross-links involve residues lysine 14 and lysine 52. The span at 56–66 (SGLSSTSVTTN) shows a compositional bias: low complexity. Positions 277 to 311 (ADGTSSSTSTYQLQESLQGLTSQPGEFDTVQSPST) are enriched in polar residues. A Phosphoserine modification is found at serine 338. Aspartate 352 functions as the Nucleophile in the catalytic mechanism. Aspartate 352, aspartate 354, and aspartate 580 together coordinate Mg(2+). Aspartate 354 acts as the Proton donor in catalysis.

Belongs to the HAD-like hydrolase superfamily. EYA family. Interacts with SIX3; translocates EYA4 from the cytoplasm to the nucleus and promotes activation of their target genes. Mg(2+) is required as a cofactor. In terms of tissue distribution, in the embryo, expressed mainly in the craniofacial mesenchyme, dermamyotome and limb.

The protein resides in the cytoplasm. The protein localises to the nucleus. The catalysed reaction is O-phospho-L-tyrosyl-[protein] + H2O = L-tyrosyl-[protein] + phosphate. Its function is as follows. Tyrosine phosphatase that specifically dephosphorylates 'Tyr-142' of histone H2AX (H2AXY142ph). 'Tyr-142' phosphorylation of histone H2AX plays a central role in DNA repair and acts as a mark that distinguishes between apoptotic and repair responses to genotoxic stress. Promotes efficient DNA repair by dephosphorylating H2AX, promoting the recruitment of DNA repair complexes containing MDC1. Its function as histone phosphatase probably explains its role in transcription regulation during organogenesis. May be involved in development of the eye. The sequence is that of Protein phosphatase EYA4 (Eya4) from Mus musculus (Mouse).